The following is a 678-amino-acid chain: DNA ligase (678 aa).

Residues 47–51, 96–97, and E122 contribute to the NAD(+) site; these read DSDYD and SL. The active-site N6-AMP-lysine intermediate is the K124. 4 residues coordinate NAD(+): R145, E182, K300, and K324. The Zn(2+) site is built by C418, C421, C436, and C442. The region spanning 602–678 is the BRCT domain; that stretch reads AYNESFTGKT…ILEDNLKDLL (77 aa).

This sequence belongs to the NAD-dependent DNA ligase family. LigA subfamily. The cofactor is Mg(2+). Mn(2+) serves as cofactor.

It catalyses the reaction NAD(+) + (deoxyribonucleotide)n-3'-hydroxyl + 5'-phospho-(deoxyribonucleotide)m = (deoxyribonucleotide)n+m + AMP + beta-nicotinamide D-nucleotide.. Its function is as follows. DNA ligase that catalyzes the formation of phosphodiester linkages between 5'-phosphoryl and 3'-hydroxyl groups in double-stranded DNA using NAD as a coenzyme and as the energy source for the reaction. It is essential for DNA replication and repair of damaged DNA. The protein is DNA ligase of Francisella tularensis subsp. holarctica (strain OSU18).